The primary structure comprises 119 residues: Large ribosomal subunit protein bL20 (119 aa).

Belongs to the bacterial ribosomal protein bL20 family.

Functionally, binds directly to 23S ribosomal RNA and is necessary for the in vitro assembly process of the 50S ribosomal subunit. It is not involved in the protein synthesizing functions of that subunit. This chain is Large ribosomal subunit protein bL20, found in Stenotrophomonas maltophilia (strain R551-3).